The primary structure comprises 444 residues: Phosphoglucosamine mutase (444 aa).

Residue S100 is the Phosphoserine intermediate of the active site. Residues S100, D240, D242, and D244 each contribute to the Mg(2+) site. Position 100 is a phosphoserine (S100).

This sequence belongs to the phosphohexose mutase family. Mg(2+) serves as cofactor. In terms of processing, activated by phosphorylation.

It catalyses the reaction alpha-D-glucosamine 1-phosphate = D-glucosamine 6-phosphate. Its function is as follows. Catalyzes the conversion of glucosamine-6-phosphate to glucosamine-1-phosphate. In Moorella thermoacetica (strain ATCC 39073 / JCM 9320), this protein is Phosphoglucosamine mutase.